The sequence spans 452 residues: MKQTFRFIKPIERITHLKPNATMMLFLASVLAVIMANSSLSTIYHEILEYPINLTIGGHEVFSHHGETMTLLQFVNDVLMVIFFLAVGLEIKQEILVGELSSFKKAMLPIVGAIGGMIVPVLFFLLVVHEGPGARGAAIPMSTDIAFALAALAVLGSRVPASLKVFLTALAVADDIGGIIVIALFYSSHINIGMLAIAFGILFIMYLMGRMHVSNLGLYFVCTFFVWLFFLQSGIHTTIAGVLAAFMIPARPGLHAKNLRAEMRSLFEAMPNDKIRQSGSSLILSHNQINVINSMRKIARKAISPMQLMEEYLSPIVGYFVLPLFAFANAGITLGGVTADALWGVPMAVFLGLFVGKPLGIYFFTYGFVKMRLCPWPEGMSRLNLMAVSLFGGIGFTVSLFIATLSYAGAEHLLFLNEAKLGIFVASIFAALVGIVTLRYELNLESAKAQKS.

The next 11 helical transmembrane spans lie at 23–43 (MMLF…LSTI), 71–91 (LLQF…GLEI), 108–128 (LPIV…LLVV), 136–156 (GAAI…AVLG), 165–185 (VFLT…IALF), 189–209 (HINI…YLMG), 216–236 (LGLY…SGIH), 316–336 (IVGY…TLGG), 349–369 (VFLG…YGFV), 385–405 (LMAV…IATL), and 418–438 (EAKL…IVTL).

This sequence belongs to the NhaA Na(+)/H(+) (TC 2.A.33) antiporter family.

The protein localises to the cell inner membrane. The catalysed reaction is Na(+)(in) + 2 H(+)(out) = Na(+)(out) + 2 H(+)(in). Its function is as follows. Na(+)/H(+) antiporter that extrudes sodium in exchange for external protons. This is Na(+)/H(+) antiporter NhaA from Porphyromonas gingivalis (strain ATCC BAA-308 / W83).